Here is a 94-residue protein sequence, read N- to C-terminus: Large ribosomal subunit protein uL23c (94 aa).

The protein belongs to the universal ribosomal protein uL23 family. Part of the 50S ribosomal subunit.

Its subcellular location is the plastid. The protein localises to the chloroplast. Binds to 23S rRNA. In Tupiella akineta (Green alga), this protein is Large ribosomal subunit protein uL23c (rpl23).